Consider the following 230-residue polypeptide: 7-cyano-7-deazaguanine synthase (230 aa).

10–20 is an ATP binding site; the sequence is LSGGLDSATTA. Zn(2+) contacts are provided by cysteine 191, cysteine 199, cysteine 202, and cysteine 205.

This sequence belongs to the QueC family. Requires Zn(2+) as cofactor.

The enzyme catalyses 7-carboxy-7-deazaguanine + NH4(+) + ATP = 7-cyano-7-deazaguanine + ADP + phosphate + H2O + H(+). The protein operates within purine metabolism; 7-cyano-7-deazaguanine biosynthesis. In terms of biological role, catalyzes the ATP-dependent conversion of 7-carboxy-7-deazaguanine (CDG) to 7-cyano-7-deazaguanine (preQ(0)). In Gloeothece citriformis (strain PCC 7424) (Cyanothece sp. (strain PCC 7424)), this protein is 7-cyano-7-deazaguanine synthase.